Here is a 315-residue protein sequence, read N- to C-terminus: Thioredoxin reductase (315 aa).

FAD is bound at residue 45–52; the sequence is EGSTPGGK. C145 and C148 are joined by a disulfide. Residue 288–297 participates in FAD binding; the sequence is DCRSKHFRQI.

Belongs to the class-II pyridine nucleotide-disulfide oxidoreductase family. As to quaternary structure, homodimer. FAD serves as cofactor.

The protein resides in the cytoplasm. The enzyme catalyses [thioredoxin]-dithiol + NADP(+) = [thioredoxin]-disulfide + NADPH + H(+). This is Thioredoxin reductase (trxB) from Mycoplasma pneumoniae (strain ATCC 29342 / M129 / Subtype 1) (Mycoplasmoides pneumoniae).